A 173-amino-acid chain; its full sequence is MIRKEVEEAPWWITETGVIISKKLKKPRKTFITPHGYEMIGYTHPKKGTQNYLVHRLVAKYFIYDIPKGMFVNHIDGNKLNNHVRNLEIVTPKENTLHAMKIGLMSGQPGESNSMSKLTNMEATNLIYDLIAGMNNVEAGEKYSLHPRYVSLIRHKRRWKTLWDRIERSTTIA.

Functionally, a possible homing endonuclease, it is entirely encoded within the YosP intron. The protein is SPbeta prophage-derived putative HNH homing endonuclease YosQ (yosQ) of Bacillus subtilis (strain 168).